A 398-amino-acid polypeptide reads, in one-letter code: Probable peptidoglycan glycosyltransferase FtsW (398 aa).

The Cytoplasmic segment spans residues 1–25 (MCYGGTAMMAFADIKEALTPKPSAQ). The helical transmembrane segment at 26-46 (LYDVPLLYCMLMLMGVGFVMV) threads the bilayer. At 47 to 69 (TSASMPTADRLFGNIYHFTIRHG) the chain is on the periplasmic side. The chain crosses the membrane as a helical span at residues 70-90 (IFLALSFCLFWITTSVPMSWW). A topological domain (cytoplasmic) is located at residue K91. Residues 92-112 (KANPYLLLVGLGLLLIVLIVG) form a helical membrane-spanning segment. The Periplasmic portion of the chain corresponds to 113–120 (REVNGSTR). Residues 121 to 141 (WIPIGPFNIQASELAKLFFFS) form a helical membrane-spanning segment. At 142–156 (YISGYLVRKRSEVQE) the chain is on the cytoplasmic side. A helical transmembrane segment spans residues 157-177 (NIKGFIKPILVFAAYAGLILM). Topologically, residues 178–179 (QP) are periplasmic. A helical membrane pass occupies residues 180–200 (DLGTVVVMFVTTVGLLFLAGA). K201 is a topological domain (cytoplasmic). A helical transmembrane segment spans residues 202 to 222 (LWQFFVLILTGVALVIGLIVL). The Periplasmic segment spans residues 223 to 289 (EPYRMARVIG…DFIFAVIAEE (67 aa)). The chain crosses the membrane as a helical span at residues 290–312 (LGFVGVSSILIVLGTLVFRALLI). Residues 313–324 (GQNALKNGKEYE) lie on the Cytoplasmic side of the membrane. A helical transmembrane segment spans residues 325 to 345 (GYLALAIGIWFAFQTMVNVGA). Residues 346 to 356 (SAGILPTKGLT) lie on the Periplasmic side of the membrane. A helical membrane pass occupies residues 357–377 (LPFISYGGSSLLMMTIAAGIL). At 378–398 (LRVDFETKMATKQATSGGAKR) the chain is on the cytoplasmic side.

This sequence belongs to the SEDS family. FtsW subfamily.

Its subcellular location is the cell inner membrane. It carries out the reaction [GlcNAc-(1-&gt;4)-Mur2Ac(oyl-L-Ala-gamma-D-Glu-L-Lys-D-Ala-D-Ala)](n)-di-trans,octa-cis-undecaprenyl diphosphate + beta-D-GlcNAc-(1-&gt;4)-Mur2Ac(oyl-L-Ala-gamma-D-Glu-L-Lys-D-Ala-D-Ala)-di-trans,octa-cis-undecaprenyl diphosphate = [GlcNAc-(1-&gt;4)-Mur2Ac(oyl-L-Ala-gamma-D-Glu-L-Lys-D-Ala-D-Ala)](n+1)-di-trans,octa-cis-undecaprenyl diphosphate + di-trans,octa-cis-undecaprenyl diphosphate + H(+). It functions in the pathway cell wall biogenesis; peptidoglycan biosynthesis. Its function is as follows. Peptidoglycan polymerase that is essential for cell division. This chain is Probable peptidoglycan glycosyltransferase FtsW, found in Pseudoalteromonas translucida (strain TAC 125).